A 1040-amino-acid polypeptide reads, in one-letter code: Multidrug resistance protein MdtB (1040 aa).

Helical transmembrane passes span 25-45 (LLMA…PVAA), 347-367 (LMLA…NIPA), 369-389 (IIPG…MVFL), 396-416 (LTLM…IVVI), 440-460 (IGFT…PLLF), 472-492 (FAVT…TLTP), 537-557 (WLTL…WIVI), 863-883 (LGST…VLGV), 888-908 (FIHP…ALLA), 910-930 (IIAG…LIGI), 968-988 (ILMT…STGV), and 998-1018 (IAMV…TPVI).

Belongs to the resistance-nodulation-cell division (RND) (TC 2.A.6) family. MdtB subfamily. In terms of assembly, part of a tripartite efflux system composed of MdtA, MdtB and MdtC. MdtB forms a heteromultimer with MdtC.

The protein resides in the cell inner membrane. The chain is Multidrug resistance protein MdtB from Salmonella schwarzengrund (strain CVM19633).